A 54-amino-acid chain; its full sequence is Hydrophobic protein RCI2B (54 aa).

2 helical membrane-spanning segments follow: residues S2–L22 and I32–I52.

The protein belongs to the UPF0057 (PMP3) family.

It is found in the membrane. The chain is Hydrophobic protein RCI2B (RCI2B) from Arabidopsis thaliana (Mouse-ear cress).